Reading from the N-terminus, the 161-residue chain is Low molecular weight phosphotyrosine protein phosphatase (161 aa).

C14 functions as the Nucleophile in the catalytic mechanism. R20 functions as the Transition state stabilizer in the catalytic mechanism. At S57 the chain carries Phosphoserine. The active-site Proton donor is the D133.

It belongs to the low molecular weight phosphotyrosine protein phosphatase family.

It localises to the cytoplasm. It catalyses the reaction O-phospho-L-tyrosyl-[protein] + H2O = L-tyrosyl-[protein] + phosphate. The enzyme catalyses a phosphate monoester + H2O = an alcohol + phosphate. Functionally, acts on tyrosine phosphorylated proteins, low-MW aryl phosphates and natural and synthetic acyl phosphates. The chain is Low molecular weight phosphotyrosine protein phosphatase from Saccharomyces cerevisiae (strain ATCC 204508 / S288c) (Baker's yeast).